A 291-amino-acid polypeptide reads, in one-letter code: Taste receptor type 2 member 16 (291 aa).

Position 1 (M1) is a topological domain, extracellular. Residues 2-22 (IPIQLTVFFMIIYVLESLTII) form a helical membrane-spanning segment. Topologically, residues 23–41 (VQSSLIVAVLGREWLQVRR) are cytoplasmic. The chain crosses the membrane as a helical span at residues 42–62 (LMPVDMILISLGISRFCLQWA). Residues 63–84 (SMLNNFCSYFNLNYVLCNLTIT) lie on the Extracellular side of the membrane. Residue N80 is glycosylated (N-linked (GlcNAc...) asparagine). Residues 85–105 (WEFFNILTFWLNSLLTVFYCI) form a helical membrane-spanning segment. The Cytoplasmic segment spans residues 106–125 (KVSSFTHHIFLWLRWRILRL). Residues 126 to 146 (FPWILLGSLMITCVTIIPSAI) form a helical membrane-spanning segment. At 147–182 (GNYIQIQLLTMEHLPRNSTVTDKLENFHQYQFQAHT) the chain is on the extracellular side. N163 carries N-linked (GlcNAc...) asparagine glycosylation. A helical membrane pass occupies residues 183-203 (VALVIPFILFLASTIFLMASL). Residues 204-228 (TKQIQHHSTGHCNPSMKARFTALRS) are Cytoplasmic-facing. A helical membrane pass occupies residues 229–249 (LAVLFIVFTSYFLTILITIIG). The Extracellular portion of the chain corresponds to 250–257 (TLFDKRCW). A helical membrane pass occupies residues 258-278 (LWVWEAFVYAFILMHSTSLML). The Cytoplasmic portion of the chain corresponds to 279–291 (SSPTLKRILKGKC).

This sequence belongs to the G-protein coupled receptor T2R family. In terms of assembly, interacts with RTP3 and RTP4. In terms of tissue distribution, expressed in a subset of gustducin-positive taste receptor cells of the tongue. Expressed in circumvallate papillae and testis.

It localises to the cell membrane. Its function is as follows. Gustducin-coupled receptor implicated in the perception of bitter compounds in the oral cavity and the gastrointestinal tract. Signals through PLCB2 and the calcium-regulated cation channel TRPM5. In Homo sapiens (Human), this protein is Taste receptor type 2 member 16 (TAS2R16).